Here is a 128-residue protein sequence, read N- to C-terminus: MAKLSTDELLDAFKELTLIELSEFVKKFEETFDVTAAAPVAVAAAGGAAGAPAEAAEEQSEFDVILESAGDKKIGVIKEVRALTSLGLKEAKDLVDGAPKPVLEKVAKDAAEKAKAQLEGAGATVTLK.

It belongs to the bacterial ribosomal protein bL12 family. Homodimer. Part of the ribosomal stalk of the 50S ribosomal subunit. Forms a multimeric L10(L12)X complex, where L10 forms an elongated spine to which 2 to 4 L12 dimers bind in a sequential fashion. Binds GTP-bound translation factors.

Forms part of the ribosomal stalk which helps the ribosome interact with GTP-bound translation factors. Is thus essential for accurate translation. This chain is Large ribosomal subunit protein bL12, found in Kineococcus radiotolerans (strain ATCC BAA-149 / DSM 14245 / SRS30216).